The chain runs to 88 residues: Small ribosomal subunit protein uS15c (88 aa).

The protein belongs to the universal ribosomal protein uS15 family. Part of the 30S ribosomal subunit.

It is found in the plastid. The protein resides in the chloroplast. In Aethionema grandiflorum (Persian stone-cress), this protein is Small ribosomal subunit protein uS15c (rps15).